Here is a 412-residue protein sequence, read N- to C-terminus: Glucose-1-phosphate adenylyltransferase (412 aa).

Alpha-D-glucose 1-phosphate-binding positions include tyrosine 98, glycine 163, 178–179 (EK), and serine 189.

This sequence belongs to the bacterial/plant glucose-1-phosphate adenylyltransferase family. Homotetramer.

It catalyses the reaction alpha-D-glucose 1-phosphate + ATP + H(+) = ADP-alpha-D-glucose + diphosphate. It functions in the pathway glycan biosynthesis; glycogen biosynthesis. Functionally, involved in the biosynthesis of ADP-glucose, a building block required for the elongation reactions to produce glycogen. Catalyzes the reaction between ATP and alpha-D-glucose 1-phosphate (G1P) to produce pyrophosphate and ADP-Glc. This is Glucose-1-phosphate adenylyltransferase from Thermosipho melanesiensis (strain DSM 12029 / CIP 104789 / BI429).